Reading from the N-terminus, the 180-residue chain is WPP domain-containing protein 2 (180 aa).

A compositionally biased stretch (low complexity) spans 1-26 (MAETAETINTTISSPPPESESSTTIS). Disordered regions lie at residues 1-61 (MAET…LRIW) and 140-180 (SVKA…KSEA). The span at 27 to 36 (AMTDPTSQEA) shows a compositional bias: polar residues. Residues 37-53 (ASKDTDLTKEAESEKKP) show a composition bias toward basic and acidic residues. Positions 44 to 147 (TKEAESEKKP…LESVKARSNA (104 aa)) are WPP. At S173 the chain carries Phosphoserine.

As to quaternary structure, binds to FPP proteins. Interacts with WAP, WIP1, WIP2 and WIP3 through its WPP domain. Interacts with WIT1 and HSP70-1. As to expression, expressed in roots, stems, leaves and flowers.

It localises to the nucleus envelope. The protein resides in the cytoplasm. Its subcellular location is the nucleus. The protein localises to the golgi apparatus. Functionally, regulates the mitotic activity in roots. Plays a role with HSP70-1 in facilitating WIT1 nuclear envelope targeting. The chain is WPP domain-containing protein 2 (WPP2) from Arabidopsis thaliana (Mouse-ear cress).